The following is a 275-amino-acid chain: Transcription factor JUNGBRUNNEN 1 (275 aa).

Positions 1-24 (MSGEGNLGKDHEEENEAPLPGFRF) are disordered. The NAC domain maps to 18-167 (PLPGFRFHPT…VWTLCRIFKR (150 aa)). The DNA-binding element occupies 115-173 (VGLKKSLVYYLGSAGKGTKTDWMMHEFRLPSTTKTDSPAQQAEVWTLCRIFKRVTSQRN). The segment at 191–219 (CSKTSSLDSDHTSHRTVDSMSHEPPLPQP) is disordered. Basic and acidic residues predominate over residues 198-211 (DSDHTSHRTVDSMS).

Expressed in roots, root caps, cotyledons, tips and margin of young leaves, senescent regions of fully expanded leaves and floral tissues, including old sepals, petals, staments, mature anthers and pollen grains. Not detected in the abscission zone of open flowers, emerging lateral roots and root meristematic zones.

It localises to the nucleus. Its function is as follows. Transcription factor that binds to the 5'- RRYGCCGT-3' consensus core sequence. Central longevity regulator. Negative regulator of leaf senescence. Modulates cellular H(2)O(2) levels and enhances tolerance to various abiotic stresses through the regulation of DREB2A. This chain is Transcription factor JUNGBRUNNEN 1 (JUB1), found in Arabidopsis thaliana (Mouse-ear cress).